The chain runs to 282 residues: Ribosomal RNA small subunit methyltransferase A (282 aa).

Residues His11, Leu13, Gly44, Glu65, Asp90, and Asn106 each coordinate S-adenosyl-L-methionine.

It belongs to the class I-like SAM-binding methyltransferase superfamily. rRNA adenine N(6)-methyltransferase family. RsmA subfamily.

Its subcellular location is the cytoplasm. It carries out the reaction adenosine(1518)/adenosine(1519) in 16S rRNA + 4 S-adenosyl-L-methionine = N(6)-dimethyladenosine(1518)/N(6)-dimethyladenosine(1519) in 16S rRNA + 4 S-adenosyl-L-homocysteine + 4 H(+). Its function is as follows. Specifically dimethylates two adjacent adenosines (A1518 and A1519) in the loop of a conserved hairpin near the 3'-end of 16S rRNA in the 30S particle. May play a critical role in biogenesis of 30S subunits. The chain is Ribosomal RNA small subunit methyltransferase A from Synechococcus sp. (strain JA-2-3B'a(2-13)) (Cyanobacteria bacterium Yellowstone B-Prime).